A 406-amino-acid polypeptide reads, in one-letter code: Elongation factor Tu, chloroplastic (406 aa).

Residues 8–210 form the tr-type G domain; sequence KTHINIATIG…LLDSYIPKPK (203 aa). GTP contacts are provided by residues 17-24, 77-81, and 132-135; these read GHFNHGKT, DCPGH, and NKED. Residue Thr-24 participates in Mg(2+) binding.

This sequence belongs to the TRAFAC class translation factor GTPase superfamily. Classic translation factor GTPase family. EF-Tu/EF-1A subfamily. In terms of assembly, monomer.

The protein resides in the plastid. It is found in the chloroplast. The enzyme catalyses GTP + H2O = GDP + phosphate + H(+). Functionally, GTP hydrolase that promotes the GTP-dependent binding of aminoacyl-tRNA to the A-site of ribosomes during protein biosynthesis. The protein is Elongation factor Tu, chloroplastic (tufA) of Chaetosphaeridium globosum (Charophycean green alga).